A 210-amino-acid chain; its full sequence is 3-hexulose-6-phosphate synthase (210 aa).

This sequence belongs to the HPS/KGPDC family. HPS subfamily.

The enzyme catalyses D-ribulose 5-phosphate + formaldehyde = D-arabino-hex-3-ulose 6-phosphate. It participates in one-carbon metabolism; formaldehyde assimilation via RuMP pathway; D-fructose 6-phosphate from D-ribulose 5-phosphate and formaldehyde: step 1/2. Functionally, catalyzes the condensation of ribulose 5-phosphate with formaldehyde to form 3-hexulose 6-phosphate. This Staphylococcus aureus (strain MRSA252) protein is 3-hexulose-6-phosphate synthase.